The chain runs to 713 residues: Serologically defined colon cancer antigen 8 (713 aa).

Phosphoserine is present on residues Ser-4 and Ser-28. Positions 84–103 (QADKESEVSPSRRRKMSPLR) are disordered. The stretch at 129-175 (IHHLEAEVKFCKEELSGMKNKIQVVVLENEGLQQQLKSQRQEETLRE) forms a coiled coil. A disordered region spans residues 194–215 (EDSGVGETSKRPFSHDNADFGK). Basic and acidic residues predominate over residues 201–212 (TSKRPFSHDNAD). Residues 216–713 (AASAGEQLEL…QLPSMPQSDC (498 aa)) are sufficient for homodimerization. 2 coiled-coil regions span residues 223 to 273 (LELE…LLAA) and 348 to 707 (EEAN…QLPS). Positions 533–713 (HQLHLTRQEK…QLPSMPQSDC (181 aa)) are mediates interaction with OFD1.

Homodimer. Interacts with OFD1; the interaction is direct. Interacts with FAM161A. Interacts with RABEP2, ERC1 and CEP131. As to expression, expressed in thymus, prostate, testis, ovary, small intestine, colon, mucosa, colon and renal cancer tumors.

The protein resides in the cytoplasm. It localises to the cytoskeleton. The protein localises to the microtubule organizing center. Its subcellular location is the centrosome. It is found in the centriole. The protein resides in the cilium basal body. It localises to the cell junction. Plays a role in the establishment of cell polarity and epithelial lumen formation. Also plays an essential role in ciliogenesis and subsequent Hedgehog signaling pathway that requires the presence of intact primary cilia for pathway activation. Mechanistically, interacts with and mediates RABEP2 centrosomal localization which is critical for ciliogenesis. The sequence is that of Serologically defined colon cancer antigen 8 (SDCCAG8) from Homo sapiens (Human).